The chain runs to 280 residues: Lysosome-associated membrane glycoprotein 5 (280 aa).

A signal peptide spans 1-29 (MDLQGRGVPSIDRLRVLLMLFHTMAQIMA). Residues 30-235 (EQEVENLSGL…PVDEREQLEE (206 aa)) lie on the Extracellular side of the membrane. N-linked (GlcNAc...) asparagine glycans are attached at residues asparagine 35, asparagine 53, and asparagine 127. The chain crosses the membrane as a helical span at residues 236-256 (TLPLILGLILGLVIMVTLAIY). Topologically, residues 257 to 280 (HVHHKMTANQVQIPRDRSQYKHMG) are cytoplasmic.

The protein belongs to the LAMP family. Post-translationally, glycosylated. Expressed in plasmocytoid dendritic cells. Expressed in suprabasal skin keratinocytes and squamous cells (at protein level). Expressed in the brain and weakly in spleen and skin. Expressed in plasmocytoid dendritic cells.

It is found in the cell membrane. The protein resides in the cytoplasmic vesicle. Its subcellular location is the secretory vesicle. It localises to the synaptic vesicle membrane. The protein localises to the endoplasmic reticulum-Golgi intermediate compartment membrane. It is found in the endosome membrane. The protein resides in the cytoplasmic vesicle membrane. Its subcellular location is the cell projection. It localises to the dendrite. The protein localises to the growth cone membrane. It is found in the early endosome membrane. The protein resides in the recycling endosome. Plays a role in short-term synaptic plasticity in a subset of GABAergic neurons in the brain. This Homo sapiens (Human) protein is Lysosome-associated membrane glycoprotein 5 (LAMP5).